The chain runs to 112 residues: Protein Churchill (112 aa).

Residues C2, C5, C30, C33, H59, C61, C64, H66, H71, C88, and C91 each coordinate Zn(2+).

Belongs to the Churchill family.

In terms of biological role, transcriptional activator that mediates FGF signaling during neural development. Plays a role in the regulation of cell movement. Its function is as follows. Does not bind DNA by itself. This Homo sapiens (Human) protein is Protein Churchill (CHURC1).